A 386-amino-acid polypeptide reads, in one-letter code: MYLTKEEELILAGEYGYALQKAMEILVALGDIYGADRLIPIKSAQVAGVSYKNIGDAGIEFLRDFVEAGAKVSVYTTLNPAGIGDDEFMEKQMEVLELYRKMGIEVTSTCTPYYGANLPKFGDHIAWSESSAVSFANSILGARTNREGGPSSLAAAIVGKTPNYGLHLDENRKATVIVDVKAKVKTFADYSVLGYHVGKTLGNDVPYFKNLKPEKTEFLKELGAAMGATGSIALYHVEGETPEYREAITDKLETITVEDSDLKAVRESFQDDWSDIDMILIGCPHASLPEVKEIAELLRMRGKPLKIPLFITASRAVKALADALGYTEIIERYNGKIIPDSCFVVSPIKGWYRGIATNSGKSAFYFRSFGFSVRLDDVENLIKEAP.

7 residues coordinate (R)-5-phosphomevalonate: glycine 48, valine 49, serine 50, asparagine 53, arginine 63, asparagine 79, and proline 80. Cysteine 110 contributes to the [4Fe-4S] cluster binding site. 2 residues coordinate (R)-5-phosphomevalonate: glutamate 129 and serine 130. [4Fe-4S] cluster is bound by residues cysteine 283 and cysteine 342. A (R)-5-phosphomevalonate-binding site is contributed by lysine 361.

The protein belongs to the AcnX type II large subunit family. Heterodimer composed of a large subunit (PMDh-L) and a small subunit (PMDh-S). The cofactor is [4Fe-4S] cluster.

The catalysed reaction is (R)-5-phosphomevalonate = (2E)-3-methyl-5-phosphooxypent-2-enoate + H2O. It functions in the pathway isoprenoid biosynthesis; isopentenyl diphosphate biosynthesis via mevalonate pathway. Component of a hydro-lyase that catalyzes the dehydration of mevalonate 5-phosphate (MVA5P) to form trans-anhydromevalonate 5-phosphate (tAHMP). Involved in the archaeal mevalonate (MVA) pathway, which provides fundamental precursors for isoprenoid biosynthesis, such as isopentenyl diphosphate (IPP) and dimethylallyl diphosphate (DMAPP). The sequence is that of Phosphomevalonate dehydratase large subunit from Thermococcus kodakarensis (strain ATCC BAA-918 / JCM 12380 / KOD1) (Pyrococcus kodakaraensis (strain KOD1)).